A 715-amino-acid chain; its full sequence is Nucleolar protein 9 (715 aa).

Positions 1 to 52 (MPKPRGRRVQSAFKERVENSEATHENSIAETGSDVEISLHEDQPQTSDNKNQ) are disordered. The segment covering 13-24 (FKERVENSEATH) has biased composition (basic and acidic residues). Pumilio repeat units lie at residues 99–134 (ESRG…HIFH), 135–170 (QFLG…EIVN), 206–243 (QLEP…TMAN), 291–326 (LDTK…RSVW), 340–377 (SEEA…RLYR), 379–415 (YMKD…HILD), 531–568 (LPQE…EVLI), and 575–613 (NLFQ…RIAS). Positions 688 to 698 (YQEERAKREGE) are enriched in basic and acidic residues. Residues 688 to 715 (YQEERAKREGEDLAGSNQKRMKGRGRNR) form a disordered region. The span at 706 to 715 (KRMKGRGRNR) shows a compositional bias: basic residues.

It belongs to the NOP9 family.

Its subcellular location is the nucleus. The protein resides in the nucleolus. RNA-binding nucleolar protein required for pre-rRNA processing. Involved in production of 18S rRNA and assembly of small ribosomal subunit. The protein is Nucleolar protein 9 (NOP9) of Clavispora lusitaniae (strain ATCC 42720) (Yeast).